A 303-amino-acid polypeptide reads, in one-letter code: Probable 5-dehydro-4-deoxyglucarate dehydratase (303 aa).

The protein belongs to the DapA family.

It catalyses the reaction 5-dehydro-4-deoxy-D-glucarate + H(+) = 2,5-dioxopentanoate + CO2 + H2O. It participates in carbohydrate acid metabolism; D-glucarate degradation; 2,5-dioxopentanoate from D-glucarate: step 2/2. The protein is Probable 5-dehydro-4-deoxyglucarate dehydratase of Delftia acidovorans (strain DSM 14801 / SPH-1).